Consider the following 154-residue polypeptide: 6,7-dimethyl-8-ribityllumazine synthase (154 aa).

5-amino-6-(D-ribitylamino)uracil contacts are provided by residues phenylalanine 22, 56–58 (AFE), and 80–82 (AVI). Position 85–86 (85–86 (AT)) interacts with (2S)-2-hydroxy-3-oxobutyl phosphate. The active-site Proton donor is the histidine 88. Phenylalanine 113 serves as a coordination point for 5-amino-6-(D-ribitylamino)uracil. Position 127 (arginine 127) interacts with (2S)-2-hydroxy-3-oxobutyl phosphate.

It belongs to the DMRL synthase family.

It carries out the reaction (2S)-2-hydroxy-3-oxobutyl phosphate + 5-amino-6-(D-ribitylamino)uracil = 6,7-dimethyl-8-(1-D-ribityl)lumazine + phosphate + 2 H2O + H(+). It functions in the pathway cofactor biosynthesis; riboflavin biosynthesis; riboflavin from 2-hydroxy-3-oxobutyl phosphate and 5-amino-6-(D-ribitylamino)uracil: step 1/2. Its function is as follows. Catalyzes the formation of 6,7-dimethyl-8-ribityllumazine by condensation of 5-amino-6-(D-ribitylamino)uracil with 3,4-dihydroxy-2-butanone 4-phosphate. This is the penultimate step in the biosynthesis of riboflavin. The sequence is that of 6,7-dimethyl-8-ribityllumazine synthase from Clostridium botulinum (strain ATCC 19397 / Type A).